A 455-amino-acid chain; its full sequence is Argininosuccinate lyase (455 aa).

Belongs to the lyase 1 family. Argininosuccinate lyase subfamily.

It localises to the cytoplasm. The catalysed reaction is 2-(N(omega)-L-arginino)succinate = fumarate + L-arginine. Its pathway is amino-acid biosynthesis; L-arginine biosynthesis; L-arginine from L-ornithine and carbamoyl phosphate: step 3/3. The chain is Argininosuccinate lyase from Shewanella sp. (strain MR-7).